The primary structure comprises 266 residues: tRNA (guanine-N(1)-)-methyltransferase (266 aa).

Residues glycine 113 and 137 to 142 (LGDYVL) each bind S-adenosyl-L-methionine.

Belongs to the RNA methyltransferase TrmD family. As to quaternary structure, homodimer.

It localises to the cytoplasm. It catalyses the reaction guanosine(37) in tRNA + S-adenosyl-L-methionine = N(1)-methylguanosine(37) in tRNA + S-adenosyl-L-homocysteine + H(+). In terms of biological role, specifically methylates guanosine-37 in various tRNAs. This Paenarthrobacter aurescens (strain TC1) protein is tRNA (guanine-N(1)-)-methyltransferase.